The primary structure comprises 651 residues: F-box only protein 43 (651 aa).

Disordered regions lie at residues 14-42 (MTAG…LKGF) and 140-171 (LRRI…TSTL). Polar residues predominate over residues 27–36 (TSVSQDSGYS). Ser-33 is modified (phosphoserine; by PLK1). At Thr-195 the chain carries Phosphothreonine; by CaMK2. Positions 424-499 (SGCFELPEDS…QDKSAHQRRK (76 aa)) constitute an F-box domain. The ZBR-type zinc finger occupies 579 to 627 (ALKPCPRCQYPAKYQALKKRGTCSRKDCGFDFCSLCLCTFHGSKECGTG). The Zn(2+) site is built by Cys-583, Cys-586, Cys-601, Cys-606, Cys-611, Cys-614, His-619, and Cys-624.

As to quaternary structure, part of a SCF (SKP1-cullin-F-box) protein ligase complex. Interaction with SKP1 does not occur. In terms of processing, phosphorylated on Thr-195 by CaMK2 in response to calcium during egg activation, which promotes subsequent phosphorylation by PLK1, ubiquitination and protesomal degradation. Ubiquitinated by FBXW1 during egg activation, which promotes proteasomal degradation.

It functions in the pathway protein modification; protein ubiquitination. Functionally, required to prevent anaphase onset in cytostatic factor-arrested oocytes. Inhibits the anaphase-promoting complex/cyclosome (APC/C) ubiquitin ligase and prevents cyclin degradation. Probably recognizes and binds to some phosphorylated proteins and promotes their ubiquitination and degradation. The chain is F-box only protein 43 (fbxo43) from Xenopus laevis (African clawed frog).